Consider the following 406-residue polypeptide: CCA-adding enzyme (406 aa).

ATP contacts are provided by glycine 32 and arginine 35. CTP is bound by residues glycine 32 and arginine 35. Mg(2+) is bound by residues aspartate 45 and aspartate 47. ATP contacts are provided by arginine 116, aspartate 159, arginine 162, arginine 165, and arginine 168. Positions 116, 159, 162, 165, and 168 each coordinate CTP.

Belongs to the tRNA nucleotidyltransferase/poly(A) polymerase family. Bacterial CCA-adding enzyme type 3 subfamily. Homodimer. It depends on Mg(2+) as a cofactor.

It carries out the reaction a tRNA precursor + 2 CTP + ATP = a tRNA with a 3' CCA end + 3 diphosphate. It catalyses the reaction a tRNA with a 3' CCA end + 2 CTP + ATP = a tRNA with a 3' CCACCA end + 3 diphosphate. In terms of biological role, catalyzes the addition and repair of the essential 3'-terminal CCA sequence in tRNAs without using a nucleic acid template. Adds these three nucleotides in the order of C, C, and A to the tRNA nucleotide-73, using CTP and ATP as substrates and producing inorganic pyrophosphate. tRNA 3'-terminal CCA addition is required both for tRNA processing and repair. Also involved in tRNA surveillance by mediating tandem CCA addition to generate a CCACCA at the 3' terminus of unstable tRNAs. While stable tRNAs receive only 3'-terminal CCA, unstable tRNAs are marked with CCACCA and rapidly degraded. This is CCA-adding enzyme from Enterococcus faecalis (strain ATCC 700802 / V583).